The chain runs to 621 residues: Threonine--tRNA ligase (621 aa).

The tract at residues 1–137 (MRILQLHCDS…ESSKVVTKDS (137 aa)) is editing domain. A disordered region spans residues 128–150 (ESSKVVTKDSTTKDDDEDTSDAL). The interval 202-501 (PHVALMKKLA…SKKGKKPQLP (300 aa)) is catalytic. Zn(2+)-binding residues include Cys-294, His-346, and His-470. The span at 598–612 (QTSGKPYTGLNQSQH) shows a compositional bias: polar residues. The segment at 598 to 621 (QTSGKPYTGLNQSQHLSKRPQLMV) is disordered.

This sequence belongs to the class-II aminoacyl-tRNA synthetase family. In terms of assembly, homodimer. Requires Zn(2+) as cofactor.

It localises to the cytoplasm. The enzyme catalyses tRNA(Thr) + L-threonine + ATP = L-threonyl-tRNA(Thr) + AMP + diphosphate + H(+). Catalyzes the attachment of threonine to tRNA(Thr) in a two-step reaction: L-threonine is first activated by ATP to form Thr-AMP and then transferred to the acceptor end of tRNA(Thr). Also edits incorrectly charged L-seryl-tRNA(Thr). The chain is Threonine--tRNA ligase from Nitrosopumilus maritimus (strain SCM1).